A 447-amino-acid polypeptide reads, in one-letter code: MIKIYDTMTRSLRKFVPLTENTVNMYVCGPTVYNYIHIGNARSAVAFDTIRRYFEYTGYQVNYISNFTDIDDKIIKAATQAGVSPKELSDRFIAAFIEDTKALGVKPATQNPRVMDYIAEIISFVESLIEKDFAYEADGDVYFRVEKSEHYAKLANKTLSELEVGASGRTDAETALKENPLDFALWKSAKAGEVSWDSPWGFGRPGWHIECSVMATEILGDTIDIHGGGADLEFPHHTNEIAQSEAKTGKTFANYWMHNGFVTVDNEKMSKSLGNFVTVHDMLQTVDGQVLRFFLATQQYRKPINFTEKAIHDAEINLKYLKNTLQQPLTETADEQELKQFVIAFQDAMDDDFNTANGITVVFDMAKWINSGSYTEPVKSAFEKMLAVFGIIFEEEVLEVDIEALIAKRQEARANRDFATADAIRDQLAAQGIKLLDTKDGVRWLRD.

Cys28 lines the Zn(2+) pocket. The short motif at Pro30 to Asn40 is the 'HIGH' region element. Residues Cys211, His236, and Glu240 each contribute to the Zn(2+) site. Positions Lys268–Ser272 match the 'KMSKS' region motif. Lys271 contributes to the ATP binding site.

This sequence belongs to the class-I aminoacyl-tRNA synthetase family. In terms of assembly, monomer. It depends on Zn(2+) as a cofactor.

The protein localises to the cytoplasm. The enzyme catalyses tRNA(Cys) + L-cysteine + ATP = L-cysteinyl-tRNA(Cys) + AMP + diphosphate. The protein is Cysteine--tRNA ligase of Streptococcus pyogenes serotype M3 (strain ATCC BAA-595 / MGAS315).